Consider the following 132-residue polypeptide: MVMTDPIADMLTRIRNANLVRHEKLELPASMLKKEIADILKREGFIRDYEFIEDNKQGVIRIFLKYGPSNERVITGLKRISKPGLRVYAKSTELPRVLGGLGIALVSTSKGVLTDKEARQQQVGGEVLAYVW.

Belongs to the universal ribosomal protein uS8 family. Part of the 30S ribosomal subunit. Contacts proteins S5 and S12.

In terms of biological role, one of the primary rRNA binding proteins, it binds directly to 16S rRNA central domain where it helps coordinate assembly of the platform of the 30S subunit. This chain is Small ribosomal subunit protein uS8, found in Shouchella clausii (strain KSM-K16) (Alkalihalobacillus clausii).